A 512-amino-acid chain; its full sequence is ATP synthase subunit alpha (512 aa).

169–176 (GDRQTGKT) is an ATP binding site.

Belongs to the ATPase alpha/beta chains family. As to quaternary structure, F-type ATPases have 2 components, CF(1) - the catalytic core - and CF(0) - the membrane proton channel. CF(1) has five subunits: alpha(3), beta(3), gamma(1), delta(1), epsilon(1). CF(0) has three main subunits: a(1), b(2) and c(9-12). The alpha and beta chains form an alternating ring which encloses part of the gamma chain. CF(1) is attached to CF(0) by a central stalk formed by the gamma and epsilon chains, while a peripheral stalk is formed by the delta and b chains.

It is found in the cell inner membrane. The catalysed reaction is ATP + H2O + 4 H(+)(in) = ADP + phosphate + 5 H(+)(out). Functionally, produces ATP from ADP in the presence of a proton gradient across the membrane. The alpha chain is a regulatory subunit. This Dechloromonas aromatica (strain RCB) protein is ATP synthase subunit alpha.